A 980-amino-acid chain; its full sequence is Serine/threonine-protein phosphatase 4 regulatory subunit 3 (980 aa).

Residues 1 to 105 enclose the WH1 domain; that stretch reads MTTDTRRRVK…EKICQVQGKD (105 aa). Disordered regions lie at residues 640–668, 695–861, and 885–980; these read RDKMENRTDGGLPIIRSGGRFRRDQRQME, VSEK…SLCD, and VTAA…ARQA. The segment covering 695 to 708 has biased composition (polar residues); it reads VSEKNGPQTQNQQK. Composition is skewed to low complexity over residues 709-749, 757-789, 803-859, and 885-926; these read SSPP…SSSP, QTQAAVHLAAAALQHHQQQQQQQQQNPFQQQTQ, EAPQ…AASL, and VTAA…SPAS. A compositionally biased stretch (polar residues) spans 929–939; that stretch reads QDANSTEGTSS. A compositionally biased stretch (basic and acidic residues) spans 940-951; the sequence is EADKTTAKKGLV. A compositionally biased stretch (acidic residues) spans 953-968; sequence YESDSGEDDYEEDEYS.

This sequence belongs to the SMEK family. In terms of assembly, serine/threonine-protein phosphatase 4 (PP4) occurs in different assemblies of the catalytic and one or more regulatory subunits. Probably part of a PP4 PPP4C-PPP4R2-PPP4R3 complex containing Pp4-19C, PPP4R2r and flfl. Interacts with mira. In terms of tissue distribution, expressed in neuroblasts.

Its subcellular location is the nucleus. It is found in the membrane. The protein localises to the cytoplasm. Regulatory subunit of serine/threonine-protein phosphatase 4. The probable PP4 complex Pp4-19C-PPP4R2r-flfl (PPP4C-PPP4R2-PPP4R3) is required to prevent caspase induced cell death (in vitro). May be involved in DNA damage repair. Key mediator specific for the localization of mira and associated cell fate determinants during both interphase and mitosis. Nuclear Flfl is required to exclude mira/pros from the nucleus when inefficiently bound to the cytoskeleton/cortex, whereas cytosolic or membrane-associated flfl is required for the cortical association and asymmetric localization of mira/pros/brat/stau at metaphase and anaphase. In Drosophila melanogaster (Fruit fly), this protein is Serine/threonine-protein phosphatase 4 regulatory subunit 3 (flfl).